Reading from the N-terminus, the 720-residue chain is Nucleoporin NUP2 (720 aa).

The disordered stretch occupies residues 1–33 (MAKRVADAQIQRETYDSNESDDDVTPSTKVASS). Ser17 and Ser20 each carry phosphoserine. Positions 35–50 (VMNRRKIAMPKRRMAF) are interaction with SRP1 NLS binding site 1. Disordered regions lie at residues 52–92 (PFGS…SNSR) and 136–278 (KSIE…VDNN). An FXF 1 repeat occupies 67–69 (FSF). Polar residues predominate over residues 81-92 (VDNSPTTESNSR). Ser137 is modified (phosphoserine). The span at 147–159 (NDAKPAKVEDVQK) shows a compositional bias: basic and acidic residues. Ser165 bears the Phosphoserine mark. The FXFG 1 repeat unit spans residues 189–192 (FSFG). Positions 193–202 (PKKENRKKDE) are enriched in basic and acidic residues. Phosphoserine is present on residues Ser203 and Ser205. 2 FXF repeats span residues 216–218 (FKF) and 247–249 (FSF). Residues 243-278 (NAKPFSFSSATSTTEQTKSKNPLSLTEATKTNVDNN) are compositionally biased toward polar residues. FXFG repeat units lie at residues 285 to 288 (FTFG), 302 to 305 (FVFG), and 318 to 321 (FTFG). Over residues 315 to 324 (KSSFTFGSTT) the composition is skewed to polar residues. Residues 315–604 (KSSFTFGSTT…KPINLQNGEE (290 aa)) form a disordered region. The span at 345 to 360 (SNDSNPSFSFSIPSKN) shows a compositional bias: low complexity. Residues Ser348 and Ser351 each carry the phosphoserine modification. The FXF 4 repeat unit spans residues 352 to 354 (FSF). Thr361 carries the phosphothreonine modification. Residues 369-372 (FSFG) form an FXFG 5 repeat. The span at 373–384 (VPNSSKNETSKP) shows a compositional bias: polar residues. An FXFG 6 repeat occupies 386–389 (FSFG). Over residues 424-435 (TEKEKESKKDSK) the composition is skewed to basic and acidic residues. 5 FXFG repeats span residues 438–441 (FSFG), 474–477 (FSFG), 493–496 (FTFG), 511–514 (FSFG), and 524–527 (FSFG). The segment covering 479–495 (NTNTTKTADTKAPTFTF) has biased composition (low complexity). Residues 513-533 (FGTSQPNNTPSFSFGKTTANL) are compositionally biased toward polar residues. The segment covering 534–548 (PANSSTSPAPSIPST) has biased composition (low complexity). Residues 550–552 (FKF) form an FXF 5 repeat. A compositionally biased stretch (polar residues) spans 574–584 (TEATGNESQDA). Residue Ser581 is modified to Phosphoserine. In terms of domain architecture, RanBD1 spans 583–720 (DATKVDATPE…AIEDAKKEMK (138 aa)). Position 590 is a phosphothreonine (Thr590).

In terms of assembly, component of the nuclear pore complex (NPC). NPC constitutes the exclusive means of nucleocytoplasmic transport. NPCs allow the passive diffusion of ions and small molecules and the active, nuclear transport receptor-mediated bidirectional transport of macromolecules such as proteins, RNAs, ribonucleoparticles (RNPs), and ribosomal subunits across the nuclear envelope. Due to its 8-fold rotational symmetry, all subunits are present with 8 copies or multiples thereof. Binds to the nuclear basket of the NPC through NUP60 in a (GSP1, GSP2) GTPase-GTP-dependent manner. Interacts through its FG repeats with nuclear transport factors. Interacts with KAP122.

The protein resides in the nucleus. It localises to the nuclear pore complex. Its subcellular location is the nucleus membrane. Functionally, functions as a component of the nuclear pore complex (NPC). NPC components, collectively referred to as nucleoporins (NUPs), can play the role of both NPC structural components and of docking or interaction partners for transiently associated nuclear transport factors. Active directional transport is assured by both, a Phe-Gly (FG) repeat affinity gradient for these transport factors across the NPC and a transport cofactor concentration gradient across the nuclear envelope (GSP1 and GSP2 GTPases associated predominantly with GTP in the nucleus, with GDP in the cytoplasm). As one of the FG repeat nucleoporins NUP2 is involved in interactions with and guidance of nuclear transport receptors such as SRP1-KAP95 (importin alpha and beta) through the NPC. Like the closely related NUP1 it also plays an important role in disassembling and recycling SRP1-KAP95 to the cytoplasm after nuclear import. Upon entry of the heterotrimeric SRP1-KAP95-cargo complex in the nucleus, NUP2 binds through its N-terminus to the SRP1 nuclear localization signal (NLS) binding site, thus accelerating the release of the NLS-cargo. SRP1 in turn is released from NUP2 by binding of the GSP1-GTP associated export factor CSE1. NUP2 may also have a chromatin boundary/insulator activity through indirect interaction with genomic DNA via CSE1 and blocking of heterochromatin spreading. This is Nucleoporin NUP2 (NUP2) from Saccharomyces cerevisiae (strain ATCC 204508 / S288c) (Baker's yeast).